Here is an 879-residue protein sequence, read N- to C-terminus: Alanine--tRNA ligase (879 aa).

Zn(2+) is bound by residues His-566, His-570, Cys-668, and His-672.

The protein belongs to the class-II aminoacyl-tRNA synthetase family. Requires Zn(2+) as cofactor.

It is found in the cytoplasm. The enzyme catalyses tRNA(Ala) + L-alanine + ATP = L-alanyl-tRNA(Ala) + AMP + diphosphate. In terms of biological role, catalyzes the attachment of alanine to tRNA(Ala) in a two-step reaction: alanine is first activated by ATP to form Ala-AMP and then transferred to the acceptor end of tRNA(Ala). Also edits incorrectly charged Ser-tRNA(Ala) and Gly-tRNA(Ala) via its editing domain. This Listeria monocytogenes serovar 1/2a (strain ATCC BAA-679 / EGD-e) protein is Alanine--tRNA ligase.